Reading from the N-terminus, the 69-residue chain is DNA gyrase inhibitor YacG (69 aa).

Zn(2+) is bound by residues Cys-7, Cys-10, Cys-26, and Cys-30.

This sequence belongs to the DNA gyrase inhibitor YacG family. In terms of assembly, interacts with GyrB. The cofactor is Zn(2+).

In terms of biological role, inhibits all the catalytic activities of DNA gyrase by preventing its interaction with DNA. Acts by binding directly to the C-terminal domain of GyrB, which probably disrupts DNA binding by the gyrase. In Shewanella baltica (strain OS155 / ATCC BAA-1091), this protein is DNA gyrase inhibitor YacG.